The sequence spans 424 residues: Hemagglutinin-esterase (424 aa).

The N-terminal stretch at Met-1 to Ser-16 is a signal peptide. The tract at residues Phe-7 to Gly-127 is esterase domain 1. Topologically, residues Leu-17–Ile-392 are virion surface. Ser-40 (nucleophile) is an active-site residue. Cys-44 and Cys-65 form a disulfide bridge. N-linked (GlcNAc...) asparagine; by host glycosylation is found at Asn-54, Asn-89, Asn-153, Asn-236, and Asn-301. Disulfide bonds link Cys-113–Cys-162, Cys-197–Cys-276, and Cys-205–Cys-249. A receptor binding region spans residues Leu-128 to Leu-266. Residues Leu-267–Thr-379 form an esterase domain 2 region. The cysteines at positions 307 and 312 are disulfide-linked. N-linked (GlcNAc...) asparagine; by host glycosylation is present at Asn-316. Catalysis depends on charge relay system residues Asp-326 and His-329. Cys-347 and Cys-371 form a disulfide bridge. The N-linked (GlcNAc...) asparagine; by host glycan is linked to Asn-358. The helical transmembrane segment at Ile-393–Phe-413 threads the bilayer. At Met-414–Ala-424 the chain is on the intravirion side. A glycan (N-linked (GlcNAc...) asparagine; by host) is linked at Asn-417.

The protein belongs to the influenza type C/coronaviruses hemagglutinin-esterase family. Homodimer; disulfide-linked. Forms a complex with the M protein in the pre-Golgi. Associates then with S-M complex to form a ternary complex S-M-HE. Post-translationally, N-glycosylated in the host RER.

It is found in the virion membrane. It localises to the host cell membrane. It carries out the reaction N-acetyl-9-O-acetylneuraminate + H2O = N-acetylneuraminate + acetate + H(+). The catalysed reaction is N-acetyl-4-O-acetylneuraminate + H2O = N-acetylneuraminate + acetate + H(+). Its function is as follows. Structural protein that makes short spikes at the surface of the virus. Contains receptor binding and receptor-destroying activities. Mediates de-O-acetylation of N-acetyl-4-O-acetylneuraminic acid, which is probably the receptor determinant recognized by the virus on the surface of erythrocytes and susceptible cells. This receptor-destroying activity is important for virus release as it probably helps preventing self-aggregation and ensures the efficient spread of the progeny virus from cell to cell. May serve as a secondary viral attachment protein for initiating infection, the spike protein being the major one. May become a target for both the humoral and the cellular branches of the immune system. In Bovine coronavirus (strain Ontario) (BCoV), this protein is Hemagglutinin-esterase.